Here is a 715-residue protein sequence, read N- to C-terminus: Patatin-like phospholipase domain-containing protein ATEG_02594 (715 aa).

Residues 84–104 (WPFLAFVLGWISFLGVAYILT) form a helical membrane-spanning segment. Positions 274 to 465 (LCLSGGATFA…RTDIPIKALN (192 aa)) constitute a PNPLA domain. A GXSXG motif is present at residues 305–309 (GTSGG). The active-site Nucleophile is serine 307. Aspartate 452 functions as the Proton acceptor in the catalytic mechanism. The segment at 613–715 (TAPRGGGRAT…DVDSDTWKGQ (103 aa)) is disordered. Residues 652–661 (RTGEYSKEAD) show a composition bias toward basic and acidic residues. A compositionally biased stretch (polar residues) spans 665-678 (AEMSDSSGVDSATA).

Belongs to the PLPL family.

The protein localises to the membrane. Probable lipid hydrolase. The sequence is that of Patatin-like phospholipase domain-containing protein ATEG_02594 from Aspergillus terreus (strain NIH 2624 / FGSC A1156).